Reading from the N-terminus, the 1492-residue chain is MIFSQGASPLKGDFSKIKFSIASPESILAHSRGEVLKPETINYRTFKPERDGLMCEKIFGPTKDWECYCGKYKRVRYKGIICDRCGVEVTTKSVRRERMGHISLAVPVVHTWFFRSVPSKIGALLDLSTKELERIIYYEVYVVINPGEPGAKQGIKKLDRLTEEQYFQIITEYEDNQDLDDHDSDKFVAKMGGEAIRLLLKSIDLNETAIHLRKVLKESSSEQKRADALKRLKVVEAFRKSYEPQKKTRKKAVGLFPEDELPEPYVFEGNKPEYMVMEVVPVIPPELRPLVPLEGGRFATSDLNDLYRRVIIRNNRLKKLIDIRAPEVILRNEKRMLQEAVDALFDNSRKANAVKTGESNRPLKSLSDALKGKQGRFRQNLLGKRVDYSGRSVIVVGPELKLHECGLPKSMAIELFQPFVIRRLVERGIAKSVKSAKKLIDKKDQVVWDVLEKVIDGRPVLLNRAPTLHRLGIQAFQPVLIEGKAIQIHPLVCTAFNADFDGDQMAVHVPLSQEAQLEAALLMLSSHNLILPQSGKPVTVPSQDMVLGMYYLTKSRPGDPGEGRIFYSDEDVLIAYNEDRIGLHAQIFVHFNGAVDQKFDPLRVLDTIVDPKSEKYTWLKSQLEKKTILLTTVGRVIFNQNVPDSIGFINRVIDKKVAKELIGRLSSDVGNVETAKFLDNIKEVGFHYAMKGGLSVGLSDAIVPDTKVRHIKNAQKDSTKVVKEYNRGTLTDNERYNQIVDVWQKTSNIVAEESYQKLKKDREGFNPLYMMLDSGARGSREQVRQLTGMRGLIARPQKSMSGQPGEIIENPIISNLKEGLTVLEYFISTHGARKGLSDTSLKTADAGYLTRRLHDVAQDVIVTIEDCGTTRGLHVYRNIEEETSGQIKFREKIRGRVAARDIYDTLNNNVIVKAGEIITEELGDLIQETAGVEEAEIRSVLTCESKIGICSKCYGTNLSVHQIVEIGEAVGVIAAQSIGEPGTQLTLRTFHQGGTAQGGISETETKAFYEGQLEFEDLKTVEHSAITEDGVEEIRIIVVQKNGKINIVDPDSGKILKRYVVPHGAHLHCNAKALVKKDQVLFSSEPNSTQIIAELHGRVKFADIEKGVTYKEEVDPQTGFAQHTIINWRSKLRANETREPRVLIIDESGEVRKNYPVPIKSNLYVEDGQKIVPGDIIAKVPRNLDRAGGDITAGLPKVTELFEARIPSDPAIVSEIDGYVSFGSQRRSSKEIKVKNDFGEEKVYYVQVGKHVLANEGDEVKAGDAMTDGAVSPQDILRIQGPNAVQQYLVNEIQKVYQINAGVEINDKHLEVIVRQMLQKVRVEEPGDTELLPGDLIDRSAFVEANNNVAEKVRVTEKGDAPSRIQEGQLYKTRDITKLNRELRKNSKNLVAFEPALQATSHPVLLGITSAALQTESVISAASFQETTKVLTDAAVAGKIDYLAGLKENVIVGKLIPAGTGLKRYRNLTLTGESVETISHDASDDASTQNGI.

Residues cysteine 67, cysteine 69, cysteine 82, and cysteine 85 each contribute to the Zn(2+) site. Mg(2+) contacts are provided by aspartate 499, aspartate 501, and aspartate 503. Zn(2+)-binding residues include cysteine 867, cysteine 943, cysteine 950, and cysteine 953.

The protein belongs to the RNA polymerase beta' chain family. In terms of assembly, the RNAP catalytic core consists of 2 alpha, 1 beta, 1 beta' and 1 omega subunit. When a sigma factor is associated with the core the holoenzyme is formed, which can initiate transcription. It depends on Mg(2+) as a cofactor. The cofactor is Zn(2+).

It catalyses the reaction RNA(n) + a ribonucleoside 5'-triphosphate = RNA(n+1) + diphosphate. DNA-dependent RNA polymerase catalyzes the transcription of DNA into RNA using the four ribonucleoside triphosphates as substrates. The chain is DNA-directed RNA polymerase subunit beta' from Chlorobium phaeobacteroides (strain DSM 266 / SMG 266 / 2430).